A 486-amino-acid polypeptide reads, in one-letter code: 2-hydroxymuconic semialdehyde dehydrogenase (486 aa).

Active-site residues include Glu254 and Cys288.

Belongs to the aldehyde dehydrogenase family. In terms of assembly, homodimer.

It catalyses the reaction (2Z,4E)-2-hydroxy-6-oxohexa-2,4-dienoate + NAD(+) + H2O = (2Z,4E)-2-hydroxyhexa-2,4-dienedioate + NADH + 2 H(+). Its pathway is aromatic compound metabolism; benzoate degradation via hydroxylation. Its function is as follows. 2-hydroxymuconic acid semialdehyde can be converted to 2-hydroxypent-2,4-dienoate either directly by the action of 2-hydroxymuconic semialdehyde hydrolase (HMSH) or by the action of three sequential enzymes, the first of which is HMSD. Can oxidize not only 2-hydroxymuconic semialdehyde and its analogs but also benzaldehyde and its analogs. In Pseudomonas putida (Arthrobacter siderocapsulatus), this protein is 2-hydroxymuconic semialdehyde dehydrogenase (xylG).